Here is a 542-residue protein sequence, read N- to C-terminus: Probable spastin homolog spas-1 (542 aa).

Positions 29–66 (RAAIEMDELTKQNGTINEKLQTAELYKQARQMLKEANE) form a coiled coil. Residues 131–177 (ATVPGDKKVSKVKQTEKAPHVCSRGDRCGAHQPPPEKKSTPLKPVNQ) form a disordered region. Residues 135–169 (GDKKVSKVKQTEKAPHVCSRGDRCGAHQPPPEKKS) show a composition bias toward basic and acidic residues. Residue 309 to 316 (GPPGNGKT) participates in ATP binding.

The protein belongs to the AAA ATPase family. Spastin subfamily. In terms of assembly, homohexamer. The homohexamer is stabilized by ATP-binding. The homohexamer may adopt a ring conformation through which microtubules pass prior to being severed. Interacts with microtubules.

It is found in the cytoplasm. Its subcellular location is the cytoskeleton. The protein resides in the perinuclear region. It carries out the reaction n ATP + n H2O + a microtubule = n ADP + n phosphate + (n+1) alpha/beta tubulin heterodimers.. Its function is as follows. Severs microtubules, probably in an ATP-dependent fashion. The protein is Probable spastin homolog spas-1 (spas-1) of Caenorhabditis briggsae.